Here is a 472-residue protein sequence, read N- to C-terminus: MRSSVLSLHPDRLLPADPGTRAIAGRLYAQIATLPIISPHGHTDPAWFATNAPFADATELLLVPDHYVFRMLYSQGIDLDAIGIPRADGMRAAVDPRAAWRVFAAHYTVLRGTPSALWLNHVFHDVFDLRLRLDAGTADHYYDHITAALQTPDFLPRALFERFNIEVIATTESPLDPLHHHAAIAASGWQGRVVTAYRPDPVVDPEHAQFAGALQQFGALTGEDVLTWNGYLRAHRQRRAFFAAHGATSTDHGHPSAATADLSPAQAQRLFDTVVRGAATPEQAELFRAQVLTEMAAMSLDDGLVMQLHPGCFRNHNRPLFERYGRDKGADIPMRTDYVHALKPLLDRYGNDPRLRLIVFTLDETSYSRELAPLAGHYPSLLLGPAWWFHDAPEGMWRFREQTLASAGFYNTVGFNDDTRAFLSIPARHDVARRVDSAFLAKLVAEHRLEEDEATEVAIDLAYRMPKRAYNL.

It belongs to the metallo-dependent hydrolases superfamily. Uronate isomerase family.

It carries out the reaction D-glucuronate = D-fructuronate. The enzyme catalyses aldehydo-D-galacturonate = keto-D-tagaturonate. Its pathway is carbohydrate metabolism; pentose and glucuronate interconversion. In Xanthomonas oryzae pv. oryzae (strain MAFF 311018), this protein is Uronate isomerase.